Reading from the N-terminus, the 54-residue chain is Ovomucoid (54 aa).

The Kazal-like domain maps to 4–54 (VNCSDYPKPVCSLLYMPLCGSDNKTYGNKCNFCNAVADSNGTLTLSHFGKC). Cystine bridges form between cysteine 6–cysteine 36, cysteine 14–cysteine 33, and cysteine 22–cysteine 54. A glycan (N-linked (GlcNAc...) asparagine) is linked at asparagine 43.

It localises to the secreted. This chain is Ovomucoid, found in Geococcyx californianus (Greater roadrunner).